Here is an 880-residue protein sequence, read N- to C-terminus: Alanine--tRNA ligase (880 aa).

Positions 563, 567, 665, and 669 each coordinate Zn(2+).

This sequence belongs to the class-II aminoacyl-tRNA synthetase family. Requires Zn(2+) as cofactor.

It is found in the cytoplasm. It catalyses the reaction tRNA(Ala) + L-alanine + ATP = L-alanyl-tRNA(Ala) + AMP + diphosphate. Its function is as follows. Catalyzes the attachment of alanine to tRNA(Ala) in a two-step reaction: alanine is first activated by ATP to form Ala-AMP and then transferred to the acceptor end of tRNA(Ala). Also edits incorrectly charged Ser-tRNA(Ala) and Gly-tRNA(Ala) via its editing domain. This Desulforudis audaxviator (strain MP104C) protein is Alanine--tRNA ligase.